A 305-amino-acid polypeptide reads, in one-letter code: UDP-N-acetylenolpyruvoylglucosamine reductase 2 (305 aa).

The FAD-binding PCMH-type domain maps to valine 33–glycine 197. Residue arginine 176 is part of the active site. Catalysis depends on serine 226, which acts as the Proton donor. The active site involves glutamate 296.

The protein belongs to the MurB family. The cofactor is FAD.

The protein localises to the cytoplasm. It carries out the reaction UDP-N-acetyl-alpha-D-muramate + NADP(+) = UDP-N-acetyl-3-O-(1-carboxyvinyl)-alpha-D-glucosamine + NADPH + H(+). Its pathway is cell wall biogenesis; peptidoglycan biosynthesis. In terms of biological role, cell wall formation. The sequence is that of UDP-N-acetylenolpyruvoylglucosamine reductase 2 from Bacillus thuringiensis subsp. konkukian (strain 97-27).